The primary structure comprises 71 residues: uncharacterized protein (71 aa).

A helical membrane pass occupies residues 5–22 (VVMCSGLFCSVFAGAFML).

The protein resides in the membrane. This is an uncharacterized protein from Bacillus subtilis (strain 168).